A 496-amino-acid chain; its full sequence is Alanine aminotransferase 1 (496 aa).

At Ala2 the chain carries N-acetylalanine. Position 22 is a phosphothreonine (Thr22). N6-(pyridoxal phosphate)lysine is present on Lys314.

It belongs to the class-I pyridoxal-phosphate-dependent aminotransferase family. Alanine aminotransferase subfamily. As to quaternary structure, homodimer. Pyridoxal 5'-phosphate serves as cofactor.

It localises to the cytoplasm. The catalysed reaction is L-alanine + 2-oxoglutarate = pyruvate + L-glutamate. Its pathway is amino-acid degradation; L-alanine degradation via transaminase pathway; pyruvate from L-alanine: step 1/1. Its function is as follows. Catalyzes the reversible transamination between alanine and 2-oxoglutarate to form pyruvate and glutamate. Participates in cellular nitrogen metabolism and also in liver gluconeogenesis starting with precursors transported from skeletal muscles. This chain is Alanine aminotransferase 1 (GPT), found in Bos taurus (Bovine).